The primary structure comprises 204 residues: Holliday junction branch migration complex subunit RuvA (204 aa).

The segment at 1–63 (MIGWLQGRVL…EDGQFLYGFS (63 aa)) is domain I. The segment at 64–142 (SFLQRQLFRE…KNDLFLCDES (79 aa)) is domain II. The interval 143–152 (ESSRAPIALS) is flexible linker. A domain III region spans residues 152-204 (SASEEAIQALIALELAPAEAELWVKKAQKTLAEDADSAALIKTAFALRLQGAK).

It belongs to the RuvA family. In terms of assembly, homotetramer. Forms an RuvA(8)-RuvB(12)-Holliday junction (HJ) complex. HJ DNA is sandwiched between 2 RuvA tetramers; dsDNA enters through RuvA and exits via RuvB. An RuvB hexamer assembles on each DNA strand where it exits the tetramer. Each RuvB hexamer is contacted by two RuvA subunits (via domain III) on 2 adjacent RuvB subunits; this complex drives branch migration. In the full resolvosome a probable DNA-RuvA(4)-RuvB(12)-RuvC(2) complex forms which resolves the HJ.

Its subcellular location is the cytoplasm. In terms of biological role, the RuvA-RuvB-RuvC complex processes Holliday junction (HJ) DNA during genetic recombination and DNA repair, while the RuvA-RuvB complex plays an important role in the rescue of blocked DNA replication forks via replication fork reversal (RFR). RuvA specifically binds to HJ cruciform DNA, conferring on it an open structure. The RuvB hexamer acts as an ATP-dependent pump, pulling dsDNA into and through the RuvAB complex. HJ branch migration allows RuvC to scan DNA until it finds its consensus sequence, where it cleaves and resolves the cruciform DNA. The protein is Holliday junction branch migration complex subunit RuvA of Dichelobacter nodosus (strain VCS1703A).